The sequence spans 311 residues: Glycine--tRNA ligase alpha subunit (311 aa).

Belongs to the class-II aminoacyl-tRNA synthetase family. As to quaternary structure, tetramer of two alpha and two beta subunits.

Its subcellular location is the cytoplasm. The catalysed reaction is tRNA(Gly) + glycine + ATP = glycyl-tRNA(Gly) + AMP + diphosphate. This chain is Glycine--tRNA ligase alpha subunit, found in Brucella anthropi (strain ATCC 49188 / DSM 6882 / CCUG 24695 / JCM 21032 / LMG 3331 / NBRC 15819 / NCTC 12168 / Alc 37) (Ochrobactrum anthropi).